A 219-amino-acid polypeptide reads, in one-letter code: Probable octanoyltransferase (219 aa).

Residues 43-219 (QPPKPTIITS…NNLDSFLMSK (177 aa)) form the BPL/LPL catalytic domain. Substrate contacts are provided by residues 83–90 (RGGQTTFH), 151–153 (AIG), and 164–166 (GLA). The active-site Acyl-thioester intermediate is Cys-182.

It belongs to the LipB family.

The enzyme catalyses octanoyl-[ACP] + L-lysyl-[protein] = N(6)-octanoyl-L-lysyl-[protein] + holo-[ACP] + H(+). Its pathway is protein modification; protein lipoylation via endogenous pathway; protein N(6)-(lipoyl)lysine from octanoyl-[acyl-carrier-protein]: step 1/2. In terms of biological role, catalyzes the transfer of endogenously produced octanoic acid from octanoyl-acyl-carrier-protein onto the lipoyl domains of lipoate-dependent enzymes. Lipoyl-ACP can also act as a substrate although octanoyl-ACP is likely to be the physiological substrate. The polypeptide is Probable octanoyltransferase (Schizosaccharomyces pombe (strain 972 / ATCC 24843) (Fission yeast)).